The chain runs to 55 residues: Large ribosomal subunit protein bL33 (55 aa).

Belongs to the bacterial ribosomal protein bL33 family.

This Roseobacter denitrificans (strain ATCC 33942 / OCh 114) (Erythrobacter sp. (strain OCh 114)) protein is Large ribosomal subunit protein bL33.